Reading from the N-terminus, the 806-residue chain is MASKIKNGLSDTTLRKSSSTSLRVPRLTRIVTKPDSNSPSPTQQQSRLSFERPSSNSKPSTDKRSPKAPTPPEKTQIRAVRVSESQPQSVQIKEDLKKANELIASLENEKAKALDQLKEARKEAEEASEKLDEALEAQKKSLENFEIEKFEVVEAGIEAVQRKEEELKKELENVKNQHASESATLLLVTQELENVNQELANAKDAKSKALCRADDASKMAAIHAEKVEILSSELIRLKALLDSTREKEIISKNEIALKLGAEIVDLKRDLENARSLEAKVKELEMIIEQLNVDLEAAKMAESYAHGFADEWQNKAKELEKRLEEANKLEKCASVSLVSVTKQLEVSNSRLHDMESEITDLKEKIELLEMTVASQKVDLEKSEQKLGIAEEESSKSEKEAEKLKNELETVNEEKTQALKKEQDATSSVQRLLEEKKKILSELESSKEEEEKSKKAMESLASALHEVSSESRELKEKLLSRGDQNYETQIEDLKLVIKATNNKYENMLDEARHEIDVLVNAVEQTKKQFESAMVDWEMREAGLVNHVKEFDEEVSSMGKEMNRLGNLVKRTKEEADASWEKESQMRDCLKEVEDEVIYLQETLREAKAETLKLKGKMLDKETEFQSIVHENDELRVKQDDSLKKIKELSELLEEALAKKHIEENGELSESEKDYDLLPKVVEFSEENGYRSAEEKSSKVETLDGMNMKLEEDTEKKEKKERSPEDETVEVEFKMWESCQIEKKEVFHKESAKEEEEDLNVVDQSQKTSPVNGLTGEDELLKEKEKKKKKTLFGKVGNLLKKKGPVNQK.

A chloroplast-targeting transit peptide spans 1-78 (MASKIKNGLS…PTPPEKTQIR (78 aa)). 2 disordered regions span residues 1–94 (MASK…QIKE) and 380–403 (KSEQ…EKLK). Positions 9–22 (LSDTTLRKSSSTSL) are enriched in low complexity. A compositionally biased stretch (polar residues) spans 34–59 (PDSNSPSPTQQQSRLSFERPSSNSKP). Coiled coils occupy residues 88–530 (QSVQ…FESA), 585–662 (DCLK…IEEN), and 698–757 (ETLD…EDLN). A compositionally biased stretch (basic and acidic residues) spans 391–403 (ESSKSEKEAEKLK). 2 disordered regions span residues 684 to 725 (ENGY…EDET) and 746 to 777 (KESA…EDEL). Basic and acidic residues-rich tracts occupy residues 685–699 (NGYR…KVET) and 706–725 (KLEE…EDET). Positions 759 to 769 (VDQSQKTSPVN) are enriched in polar residues.

Belongs to the WEB family.

The protein resides in the plastid. Its subcellular location is the chloroplast. This is WEB family protein At3g02930, chloroplastic from Arabidopsis thaliana (Mouse-ear cress).